A 321-amino-acid chain; its full sequence is Glucokinase (321 aa).

8 to 13 (ADIGGT) contacts ATP.

The protein belongs to the bacterial glucokinase family.

It localises to the cytoplasm. It catalyses the reaction D-glucose + ATP = D-glucose 6-phosphate + ADP + H(+). The protein is Glucokinase of Photorhabdus laumondii subsp. laumondii (strain DSM 15139 / CIP 105565 / TT01) (Photorhabdus luminescens subsp. laumondii).